Reading from the N-terminus, the 284-residue chain is UPF0276 protein Ping_0944 (284 aa).

The protein belongs to the UPF0276 family.

The polypeptide is UPF0276 protein Ping_0944 (Psychromonas ingrahamii (strain DSM 17664 / CCUG 51855 / 37)).